A 396-amino-acid polypeptide reads, in one-letter code: MRFRSSSHSLKHVDRELKELINSSENANKCGECGNFYPTWCSVNLGVFLCGRCASVHRKVFGSRDDDAFSNVKSLSMDRWTREDIDELVSLGGNKGNARFWNPKNVPFPFDGDDDKAIVEHYIRDKYILGKFRYDEIKPEDFGSRMDDFDGESDRFDERNRSRSRSRSHSFYKGGHNRSDYGGSRDSFQSSGSRYSRQLAELKDMGFGDTNKNLDALSSAHGNINRAIDYLEKSSSSRNSVSAAATTSTPPLPRRRATTSGPQPAIFDGTNVITPDFTSNSASFVQAKPAVFDGTLQQYYDPATGMIYVDQQQYAMAMQQQQQQQQQLAVAQAQAQAQAQAQAQVQAQAQAQAQAQAQAQQIQMQQLQMQQQQQAPLSFQQMSQGGNLPQGYFYTQ.

An Arf-GAP domain is found at aspartate 14 to aspartate 141. The segment at cysteine 30–cysteine 53 adopts a C4-type zinc-finger fold. Residues aspartate 148–arginine 161 show a composition bias toward basic and acidic residues. Disordered stretches follow at residues aspartate 148 to arginine 194 and lysine 233 to isoleucine 266. Serine 153 is subject to Phosphoserine. Tyrosine 181 is modified (phosphotyrosine). Phosphoserine occurs at positions 184 and 187. The UBA domain maps to serine 193 to serine 234. Over residues serine 234 to threonine 249 the composition is skewed to low complexity. The residue at position 240 (serine 240) is a Phosphoserine. Residue threonine 249 is modified to Phosphothreonine.

The protein resides in the nucleus. Appears to modulate the timing of budding to obtain an appropriate cell size independent of the DNA replication cycle. Transcription factor involved in both heat resistance and flocculation. This is Protein GTS1 (GTS1) from Saccharomyces cerevisiae (strain ATCC 204508 / S288c) (Baker's yeast).